Consider the following 380-residue polypeptide: Cytochrome b (380 aa).

Transmembrane regions (helical) follow at residues 34–54, 78–99, 114–134, and 179–199; these read FGSL…LLAM, WLIR…YMHI, WNTG…GYVL, and FFAL…IHLT. Residues H84 and H98 each coordinate heme b. Heme b contacts are provided by H183 and H197. H202 is an a ubiquinone binding site. Transmembrane regions (helical) follow at residues 227–247, 289–309, 321–341, and 348–368; these read LKDI…ALFS, LGGV…PLLH, LSQL…WIGS, and FIII…ILFP.

Belongs to the cytochrome b family. In terms of assembly, the cytochrome bc1 complex contains 11 subunits: 3 respiratory subunits (MT-CYB, CYC1 and UQCRFS1), 2 core proteins (UQCRC1 and UQCRC2) and 6 low-molecular weight proteins (UQCRH/QCR6, UQCRB/QCR7, UQCRQ/QCR8, UQCR10/QCR9, UQCR11/QCR10 and a cleavage product of UQCRFS1). This cytochrome bc1 complex then forms a dimer. It depends on heme b as a cofactor.

It is found in the mitochondrion inner membrane. Component of the ubiquinol-cytochrome c reductase complex (complex III or cytochrome b-c1 complex) that is part of the mitochondrial respiratory chain. The b-c1 complex mediates electron transfer from ubiquinol to cytochrome c. Contributes to the generation of a proton gradient across the mitochondrial membrane that is then used for ATP synthesis. This Oceanodroma furcata (Fork-tailed storm-petrel) protein is Cytochrome b (MT-CYB).